A 101-amino-acid polypeptide reads, in one-letter code: NAD(P)H-quinone oxidoreductase subunit 4L, chloroplastic (101 aa).

3 helical membrane-spanning segments follow: residues 2–22, 32–52, and 61–81; these read MTEH…YGLI, MCLE…SDLF, and IFSI…PAIV.

Belongs to the complex I subunit 4L family. As to quaternary structure, NDH is composed of at least 16 different subunits, 5 of which are encoded in the nucleus.

It localises to the plastid. The protein resides in the chloroplast thylakoid membrane. The catalysed reaction is a plastoquinone + NADH + (n+1) H(+)(in) = a plastoquinol + NAD(+) + n H(+)(out). The enzyme catalyses a plastoquinone + NADPH + (n+1) H(+)(in) = a plastoquinol + NADP(+) + n H(+)(out). NDH shuttles electrons from NAD(P)H:plastoquinone, via FMN and iron-sulfur (Fe-S) centers, to quinones in the photosynthetic chain and possibly in a chloroplast respiratory chain. The immediate electron acceptor for the enzyme in this species is believed to be plastoquinone. Couples the redox reaction to proton translocation, and thus conserves the redox energy in a proton gradient. In Liriodendron tulipifera (Tuliptree), this protein is NAD(P)H-quinone oxidoreductase subunit 4L, chloroplastic.